Reading from the N-terminus, the 362-residue chain is Glutamate--cysteine ligase (362 aa).

Belongs to the glutamate--cysteine ligase type 2 family. YbdK subfamily.

It catalyses the reaction L-cysteine + L-glutamate + ATP = gamma-L-glutamyl-L-cysteine + ADP + phosphate + H(+). In terms of biological role, catalyzes the synthesis of gamma-glutamylcysteine (gamma-GC), the main low-molecular-weight thiol compound instead of glutathione in halophilic archaea. The sequence is that of Glutamate--cysteine ligase from Natronomonas pharaonis (strain ATCC 35678 / DSM 2160 / CIP 103997 / JCM 8858 / NBRC 14720 / NCIMB 2260 / Gabara) (Halobacterium pharaonis).